We begin with the raw amino-acid sequence, 105 residues long: Large ribosomal subunit protein uL24 (105 aa).

Belongs to the universal ribosomal protein uL24 family. In terms of assembly, part of the 50S ribosomal subunit.

Its function is as follows. One of two assembly initiator proteins, it binds directly to the 5'-end of the 23S rRNA, where it nucleates assembly of the 50S subunit. Functionally, one of the proteins that surrounds the polypeptide exit tunnel on the outside of the subunit. The polypeptide is Large ribosomal subunit protein uL24 (Saccharophagus degradans (strain 2-40 / ATCC 43961 / DSM 17024)).